The primary structure comprises 497 residues: Glycerol kinase (497 aa).

T13 lines the ADP pocket. Positions 13, 14, and 15 each coordinate ATP. Residue T13 participates in sn-glycerol 3-phosphate binding. ADP is bound at residue R17. Positions 83, 84, and 135 each coordinate sn-glycerol 3-phosphate. Positions 83, 84, and 135 each coordinate glycerol. H231 is modified (phosphohistidine; by HPr). Sn-glycerol 3-phosphate is bound at residue D245. Glycerol is bound by residues D245 and Q246. Residues T267 and G310 each contribute to the ADP site. ATP contacts are provided by T267, G310, Q314, and G411. ADP-binding residues include G411 and N415.

It belongs to the FGGY kinase family. As to quaternary structure, homotetramer and homodimer (in equilibrium). The phosphoenolpyruvate-dependent sugar phosphotransferase system (PTS), including enzyme I, and histidine-containing protein (HPr) are required for the phosphorylation, which leads to the activation of the enzyme.

The enzyme catalyses glycerol + ATP = sn-glycerol 3-phosphate + ADP + H(+). It functions in the pathway polyol metabolism; glycerol degradation via glycerol kinase pathway; sn-glycerol 3-phosphate from glycerol: step 1/1. Its activity is regulated as follows. Activated by phosphorylation and inhibited by fructose 1,6-bisphosphate (FBP). Its function is as follows. Key enzyme in the regulation of glycerol uptake and metabolism. Catalyzes the phosphorylation of glycerol to yield sn-glycerol 3-phosphate. This is Glycerol kinase from Listeria welshimeri serovar 6b (strain ATCC 35897 / DSM 20650 / CCUG 15529 / CIP 8149 / NCTC 11857 / SLCC 5334 / V8).